Reading from the N-terminus, the 318-residue chain is Trans-prenyltransferase (318 aa).

The chain crosses the membrane as a helical span at residues 1–21 (MLHLIYISIIVVLIIILISYT). Positions 85, 88, and 122 each coordinate isopentenyl diphosphate. Residues D129 and D135 each coordinate Mg(2+). R140 contributes to the dimethylallyl diphosphate binding site. Position 141 (R141) interacts with isopentenyl diphosphate. 3 residues coordinate dimethylallyl diphosphate: K216, T217, and Q254.

Belongs to the FPP/GGPP synthase family. Asfivirus trans-prenyltransferase subfamily. The cofactor is Mg(2+).

It localises to the host endoplasmic reticulum. The protein localises to the host membrane. It catalyses the reaction isopentenyl diphosphate + dimethylallyl diphosphate = (2E)-geranyl diphosphate + diphosphate. The enzyme catalyses isopentenyl diphosphate + (2E)-geranyl diphosphate = (2E,6E)-farnesyl diphosphate + diphosphate. It carries out the reaction isopentenyl diphosphate + (2E,6E)-farnesyl diphosphate = (2E,6E,10E)-geranylgeranyl diphosphate + diphosphate. The catalysed reaction is isopentenyl diphosphate + (2E,6E,10E)-geranylgeranyl diphosphate = (2E,6E,10E,14E)-geranylfarnesyl diphosphate + diphosphate. Its pathway is isoprenoid biosynthesis; farnesyl diphosphate biosynthesis; farnesyl diphosphate from geranyl diphosphate and isopentenyl diphosphate: step 1/1. The protein operates within isoprenoid biosynthesis; geranyl diphosphate biosynthesis; geranyl diphosphate from dimethylallyl diphosphate and isopentenyl diphosphate: step 1/1. It participates in isoprenoid biosynthesis; geranylgeranyl diphosphate biosynthesis; geranylgeranyl diphosphate from farnesyl diphosphate and isopentenyl diphosphate: step 1/1. In terms of biological role, trans-prenyltransferase that catalyzes the sequential condensation of isopentenyl diphosphate (IPP) with different allylic diphosphates, such as dimethylallyl diphosphate (DMAPP), geranyl diphosphate (GPP), farnesyl diphosphate (FPP) and geranylgeranyl diphosphate (GGPP), farnesyl diphosphate being the best allylic substrate. The polypeptide is Trans-prenyltransferase (African swine fever virus (strain Badajoz 1971 Vero-adapted) (Ba71V)).